Consider the following 146-residue polypeptide: Transcription antitermination protein NusB (146 aa).

It belongs to the NusB family.

Involved in transcription antitermination. Required for transcription of ribosomal RNA (rRNA) genes. Binds specifically to the boxA antiterminator sequence of the ribosomal RNA (rrn) operons. This chain is Transcription antitermination protein NusB, found in Solibacter usitatus (strain Ellin6076).